The following is a 343-amino-acid chain: Flap endonuclease 1 (343 aa).

An N-domain region spans residues 1 to 98; sequence MGVPIGELIP…KELEKRREAR (98 aa). Residues D27, D80, E152, E154, D173, D175, and D236 each coordinate Mg(2+). The interval 116-258 is I-domain; the sequence is EARKYAQRAT…KALEIVKYSK (143 aa). An interaction with PCNA region spans residues 330 to 338; that stretch reads KQSTLESWF.

It belongs to the XPG/RAD2 endonuclease family. FEN1 subfamily. In terms of assembly, interacts with PCNA. PCNA stimulates the nuclease activity without altering cleavage specificity. Requires Mg(2+) as cofactor.

Structure-specific nuclease with 5'-flap endonuclease and 5'-3' exonuclease activities involved in DNA replication and repair. During DNA replication, cleaves the 5'-overhanging flap structure that is generated by displacement synthesis when DNA polymerase encounters the 5'-end of a downstream Okazaki fragment. Binds the unpaired 3'-DNA end and kinks the DNA to facilitate 5' cleavage specificity. Cleaves one nucleotide into the double-stranded DNA from the junction in flap DNA, leaving a nick for ligation. Also involved in the base excision repair (BER) pathway. Acts as a genome stabilization factor that prevents flaps from equilibrating into structures that lead to duplications and deletions. Also possesses 5'-3' exonuclease activity on nicked or gapped double-stranded DNA. The polypeptide is Flap endonuclease 1 (Pyrococcus abyssi (strain GE5 / Orsay)).